Reading from the N-terminus, the 132-residue chain is Amicyanin (132 aa).

A signal peptide spans 1 to 26 (MISAKTLRPAIAAIALFAIGATGAWA). Pyrrolidone carboxylic acid is present on Gln-27. The 106-residue stretch at 27–132 (QDKITVTSEK…PFMRGKVIVE (106 aa)) folds into the Plastocyanin-like domain. Residues His-80, Cys-119, His-122, and Met-125 each coordinate Cu cation.

Cu cation serves as cofactor.

The protein localises to the periplasm. Its pathway is one-carbon metabolism; methylamine degradation. In terms of biological role, primary acceptor of electrons from methylamine dehydrogenase. Passes those electrons on either a soluble cytochrome c or to pseudoazurin. The protein is Amicyanin (mauC) of Paracoccus versutus (Thiobacillus versutus).